The following is a 419-amino-acid chain: Synaptotagmin-1 (419 aa).

Residues 1–58 (MVSESHHEALAAPPVTTVATVLPSNATEPASPGEGKEDAFSKLKEKFMNELHKIPLPP) lie on the Vesicular side of the membrane. N-linked (GlcNAc...) asparagine glycosylation is present at Asn25. The helical transmembrane segment at 59 to 80 (WALIAIAIVAVLLVLTCCFCIC) threads the bilayer. 5 S-palmitoyl cysteine lipidation sites follow: Cys75, Cys76, Cys78, Cys80, and Cys83. Residues 81-419 (KKCLFKKKNK…EVDAMLAVKK (339 aa)) lie on the Cytoplasmic side of the membrane. Residues 108–139 (KDLGKTMKDQDDDAETGLTDGEEKEEPKEEEK) are disordered. The segment covering 117–131 (QDDDAETGLTDGEEK) has biased composition (acidic residues). At Thr126 the chain carries Phosphothreonine. Positions 133-379 (EPKEEEKLGK…AIGKVFVGYN (247 aa)) are phospholipid binding. Residues 139-258 (KLGKLQYSLD…DFGHVTEEWR (120 aa)) form the C2 1 domain. Leu169, Asp170, and Asp176 together coordinate Ca(2+). The residue at position 227 (Tyr227) is a Phosphotyrosine. Ca(2+) is bound by residues Asp228, Phe229, Asp230, Ser233, Lys234, and Asp236. Ser262 bears the Phosphoserine mark. The C2 2 domain maps to 270–403 (KLGDICFSLR…NPRRPIAQWH (134 aa)). Residues Asp301 and Asp307 each coordinate Ca(2+). 2 positions are modified to phosphoserine: Ser340 and Ser342. Asp361, Asp363, and Asp369 together coordinate Ca(2+).

Belongs to the synaptotagmin family. As to quaternary structure, homotetramer. Heterodimer; heterodimerizes with SYT2 in presence of calcium. Interacts with SCAMP5. Interacts with STON2. Forms a complex with SV2B, syntaxin 1 and SNAP25. Interacts with SV2A, SV2B and SV2C. Interacts with RIMS1. Interacts with PRRT2. Interacts with DNAJC5 in a phosphorylation-dependent manner. Interacts (via N-terminus) with RAB3A. Interacts with SYT12. Interacts with calmodulin. Interacts with DNM1 (via C-terminal proline-rich domain (PRD)); this interaction facilitates vesicle fission during clathrin-mediated endocytosis (CME). Ca(2+) serves as cofactor. Glycosylated.

It is found in the cytoplasmic vesicle. The protein resides in the secretory vesicle membrane. The protein localises to the secretory vesicle. Its subcellular location is the synaptic vesicle membrane. It localises to the chromaffin granule membrane. It is found in the cytoplasm. Functionally, calcium sensor that participates in triggering neurotransmitter release at the synapse. May have a regulatory role in the membrane interactions during trafficking of synaptic vesicles at the active zone of the synapse. It binds acidic phospholipids with a specificity that requires the presence of both an acidic head group and a diacyl backbone. A Ca(2+)-dependent interaction between synaptotagmin and putative receptors for activated protein kinase C has also been reported. It can bind to at least three additional proteins in a Ca(2+)-independent manner; these are neurexins, syntaxin and AP2. Plays a role in dendrite formation by melanocytes. The polypeptide is Synaptotagmin-1 (Pongo abelii (Sumatran orangutan)).